Reading from the N-terminus, the 481-residue chain is UDP-N-acetylmuramate--L-alanine ligase (481 aa).

115–121 provides a ligand contact to ATP; the sequence is GTHGKTT.

This sequence belongs to the MurCDEF family.

It localises to the cytoplasm. It carries out the reaction UDP-N-acetyl-alpha-D-muramate + L-alanine + ATP = UDP-N-acetyl-alpha-D-muramoyl-L-alanine + ADP + phosphate + H(+). The protein operates within cell wall biogenesis; peptidoglycan biosynthesis. Functionally, cell wall formation. This is UDP-N-acetylmuramate--L-alanine ligase from Granulibacter bethesdensis (strain ATCC BAA-1260 / CGDNIH1).